The sequence spans 601 residues: Elongation factor 4 (601 aa).

The tr-type G domain maps to 7 to 189 (DTIRNFSIVA…AIVAKLPPPK (183 aa)). GTP contacts are provided by residues 19-24 (DHGKST) and 136-139 (NKID).

This sequence belongs to the TRAFAC class translation factor GTPase superfamily. Classic translation factor GTPase family. LepA subfamily.

It is found in the cell inner membrane. It carries out the reaction GTP + H2O = GDP + phosphate + H(+). Its function is as follows. Required for accurate and efficient protein synthesis under certain stress conditions. May act as a fidelity factor of the translation reaction, by catalyzing a one-codon backward translocation of tRNAs on improperly translocated ribosomes. Back-translocation proceeds from a post-translocation (POST) complex to a pre-translocation (PRE) complex, thus giving elongation factor G a second chance to translocate the tRNAs correctly. Binds to ribosomes in a GTP-dependent manner. The chain is Elongation factor 4 from Methylobacterium sp. (strain 4-46).